The following is a 178-amino-acid chain: Thymidine kinase (178 aa).

ATP is bound at residue 13-20; that stretch reads GPMFAGKS. Catalysis depends on E85, which acts as the Proton acceptor. Substrate is bound at residue F115. Residues C140 and C143 each contribute to the Zn(2+) site. Position 159–163 (159–163) interacts with substrate; the sequence is IEIIG. Residues C172 and C175 each contribute to the Zn(2+) site.

This sequence belongs to the thymidine kinase family.

It catalyses the reaction thymidine + ATP = dTMP + ADP + H(+). The chain is Thymidine kinase (TK) from Myxoma virus (strain Uriarra) (MYXV).